A 159-amino-acid chain; its full sequence is Transcription elongation factor GreA (159 aa).

This sequence belongs to the GreA/GreB family.

In terms of biological role, necessary for efficient RNA polymerase transcription elongation past template-encoded arresting sites. The arresting sites in DNA have the property of trapping a certain fraction of elongating RNA polymerases that pass through, resulting in locked ternary complexes. Cleavage of the nascent transcript by cleavage factors such as GreA or GreB allows the resumption of elongation from the new 3'terminus. GreA releases sequences of 2 to 3 nucleotides. In Orientia tsutsugamushi (strain Boryong) (Rickettsia tsutsugamushi), this protein is Transcription elongation factor GreA.